A 341-amino-acid polypeptide reads, in one-letter code: Heat-inducible transcription repressor HrcA (341 aa).

This sequence belongs to the HrcA family.

Functionally, negative regulator of class I heat shock genes (grpE-dnaK-dnaJ and groELS operons). Prevents heat-shock induction of these operons. This is Heat-inducible transcription repressor HrcA from Symbiobacterium thermophilum (strain DSM 24528 / JCM 14929 / IAM 14863 / T).